We begin with the raw amino-acid sequence, 495 residues long: MIPVVALVGRPNVGKSTLFNRLTRTRDALVADFPGLTRDRKYGRAEVEGHEFIIIDTGGIDGTEDGVETRMAGQSLVAIEEADIVLFMVDARAGLMPADEGIAKHLRSREKMTVLVANKTDGLDPDMVTADFYSLGMGEVYAIAASHGRGVTSLLETVLLPFVQDEIEEPVELTEEEENAAYWAALEAEEQASEEEAEDDFNPEDLPIKLAIVGRPNVGKSTLTNRILGEERVVVYDMPGTTRDSIYIPMVRDEREYILIDTAGVRKRGKVTETVEKFSVIKTLQAIEDANVVLLVIDAREGISDQDLSLLGFILNSGRSLVIVMNKWDGLSQEVRDQVKDTLDLRLGFIDFARIHFISALHGSGVGNLFESVTEAYSCATRRVSTAMLTRIMQMASDDHQPPLVRGRRVKLKYAHAGGYNPPIVVIHGNQVKDLPDSYKRYLMNYYRRSLEVMGTPIRIQFKEGENPFAEKRNKLTPTQLRKRKRLMSHLKKSK.

EngA-type G domains follow at residues 3 to 166 and 208 to 381; these read PVVA…VQDE and IKLA…SCAT. GTP-binding positions include 9–16, 56–60, 118–121, 214–221, 261–265, and 326–329; these read GRPNVGKS, DTGGI, NKTD, DTAGV, and NKWD. A KH-like domain is found at 382–466; that stretch reads RRVSTAMLTR…PIRIQFKEGE (85 aa).

This sequence belongs to the TRAFAC class TrmE-Era-EngA-EngB-Septin-like GTPase superfamily. EngA (Der) GTPase family. Associates with the 50S ribosomal subunit.

In terms of biological role, GTPase that plays an essential role in the late steps of ribosome biogenesis. The chain is GTPase Der from Pectobacterium atrosepticum (strain SCRI 1043 / ATCC BAA-672) (Erwinia carotovora subsp. atroseptica).